We begin with the raw amino-acid sequence, 161 residues long: Probable ubiquitin-conjugating enzyme E2 16 (161 aa).

A UBC core domain is found at 15 to 161 (IATNRLQKEL…TRWWFHDDKV (147 aa)). Cys-99 serves as the catalytic Glycyl thioester intermediate.

Belongs to the ubiquitin-conjugating enzyme family.

The enzyme catalyses S-ubiquitinyl-[E1 ubiquitin-activating enzyme]-L-cysteine + [E2 ubiquitin-conjugating enzyme]-L-cysteine = [E1 ubiquitin-activating enzyme]-L-cysteine + S-ubiquitinyl-[E2 ubiquitin-conjugating enzyme]-L-cysteine.. Its pathway is protein modification; protein ubiquitination. In terms of biological role, accepts the ubiquitin from the E1 complex and catalyzes its covalent attachment to other proteins. In Arabidopsis thaliana (Mouse-ear cress), this protein is Probable ubiquitin-conjugating enzyme E2 16 (UBC16).